Here is a 1058-residue protein sequence, read N- to C-terminus: Probable plasma membrane ATPase (1058 aa).

The span at 1 to 29 (MDNNQIPKNSPESSAINSAESSPKSNVSS) shows a compositional bias: polar residues. The segment at 1–123 (MDNNQIPKNS…SSSGKKEEDY (123 aa)) is disordered. Residues 1-212 (MDNNQIPKNS…DVKRYPILEF (212 aa)) lie on the Cytoplasmic side of the membrane. Positions 31–40 (VLHENHHKEQ) are enriched in basic and acidic residues. The segment covering 41 to 66 (QQLQQQLQQEQQQQQLPTTPQSEPTQ) has biased composition (low complexity). The span at 96–111 (SLKTISGYPSSKNTEA) shows a compositional bias: polar residues. A helical membrane pass occupies residues 213-232 (LYFMWNPLSWTMEVAAIVSI). Topologically, residues 233-237 (ALLDW) are extracellular. The chain crosses the membrane as a helical span at residues 238–258 (VDFILICALLLLNATIGFIEE). Residues 259-387 (NTAGNAVEAL…GHLQVILRNI (129 aa)) lie on the Cytoplasmic side of the membrane. A helical transmembrane segment spans residues 388-407 (GLFCISFIAIWVLVELLVDF). At 408 to 425 (LGYDGYCHGVGGGRCLPL) the chain is on the extracellular side. A helical transmembrane segment spans residues 426–447 (NNALVLLVGGIPIAMPTVLSVT). The Cytoplasmic portion of the chain corresponds to 448 to 783 (MAIGATQLSK…SSRKIFQRMR (336 aa)). The active-site 4-aspartylphosphate intermediate is the Asp-480. The Mg(2+) site is built by Asp-728 and Asp-732. Residues 784–805 (NYVIYSVAATVRICTTFGILTV) traverse the membrane as a helical segment. Over 806-810 (AWNFK) the chain is Extracellular. Residues 811–833 (FPTIATVIIAILNDGTMLTISKD) form a helical membrane-spanning segment. Over 834–849 (RVRARNEPDQWNLFEV) the chain is Cytoplasmic. A helical transmembrane segment spans residues 850 to 870 (FTMALCYGFYLVGSTIVFFAI). Residues 871 to 889 (IHDGTWFHDAINLRILTDN) are Extracellular-facing. The helical transmembrane segment at 890–910 (ELRGLIYLQVSISGLATIFVS) threads the bilayer. Topologically, residues 911-922 (RSQGFSYFERPG) are cytoplasmic. The helical transmembrane segment at 923 to 943 (NLVIFAFVMSQIVATFIGVYG) threads the bilayer. Residues 944 to 967 (FRGYPHDSFSDNPDYPVHGTNFQG) are Extracellular-facing. Residues 968-988 (CGWGWAVCAWIWCFLWYIPMD) traverse the membrane as a helical segment. The Cytoplasmic portion of the chain corresponds to 989–1058 (FIKLGVTYIL…HKSVVTDNKV (70 aa)).

This sequence belongs to the cation transport ATPase (P-type) (TC 3.A.3) family. Type IIIA subfamily.

It is found in the cell membrane. It catalyses the reaction ATP + H2O + H(+)(in) = ADP + phosphate + 2 H(+)(out). Its activity is regulated as follows. Acid pH levels increase its ATPase activity. Its function is as follows. P-type plasma membrane H+-ATPase (proton pump). The proton gradient it generates drives the active transport of nutrients by H(+) symport. The resulting external acidification and/or internal alkinization may mediate growth responses. The polypeptide is Probable plasma membrane ATPase (patB) (Dictyostelium discoideum (Social amoeba)).